A 253-amino-acid polypeptide reads, in one-letter code: Chitooligosaccharide deacetylase (253 aa).

The Mg(2+) site is built by H61 and H126.

The protein belongs to the YdjC deacetylase family. ChbG subfamily. Homodimer. The cofactor is Mg(2+).

The protein resides in the cytoplasm. The enzyme catalyses N,N'-diacetylchitobiose + H2O = N-acetyl-beta-D-glucosaminyl-(1-&gt;4)-D-glucosamine + acetate. The catalysed reaction is diacetylchitobiose-6'-phosphate + H2O = N'-monoacetylchitobiose-6'-phosphate + acetate. It participates in glycan degradation; chitin degradation. Involved in the degradation of chitin. ChbG is essential for growth on the acetylated chitooligosaccharides chitobiose and chitotriose but is dispensable for growth on cellobiose and chitosan dimer, the deacetylated form of chitobiose. Deacetylation of chitobiose-6-P and chitotriose-6-P is necessary for both the activation of the chb promoter by the regulatory protein ChbR and the hydrolysis of phosphorylated beta-glucosides by the phospho-beta-glucosidase ChbF. Catalyzes the removal of only one acetyl group from chitobiose-6-P to yield monoacetylchitobiose-6-P, the inducer of ChbR and the substrate of ChbF. The chain is Chitooligosaccharide deacetylase from Serratia marcescens.